Consider the following 185-residue polypeptide: Elongation factor P (185 aa).

This sequence belongs to the elongation factor P family.

Its subcellular location is the cytoplasm. It participates in protein biosynthesis; polypeptide chain elongation. Its function is as follows. Involved in peptide bond synthesis. Stimulates efficient translation and peptide-bond synthesis on native or reconstituted 70S ribosomes in vitro. Probably functions indirectly by altering the affinity of the ribosome for aminoacyl-tRNA, thus increasing their reactivity as acceptors for peptidyl transferase. In Herpetosiphon aurantiacus (strain ATCC 23779 / DSM 785 / 114-95), this protein is Elongation factor P.